The sequence spans 869 residues: Phenylalanine--tRNA ligase beta subunit (869 aa).

Residues 41–162 (SQVTGPIVVG…QYGFSEAEYE (122 aa)) form the tRNA-binding domain. A B5 domain is found at 443–519 (PRAKAIHFKA…RLVGYDQIPI (77 aa)). The Mg(2+) site is built by Asp-497, Asp-503, Glu-506, and Glu-507. Residues 776–868 (STFPPVKQDL…EAAEIGAQLR (93 aa)) enclose the FDX-ACB domain.

The protein belongs to the phenylalanyl-tRNA synthetase beta subunit family. Type 1 subfamily. In terms of assembly, tetramer of two alpha and two beta subunits. The cofactor is Mg(2+).

It is found in the cytoplasm. It carries out the reaction tRNA(Phe) + L-phenylalanine + ATP = L-phenylalanyl-tRNA(Phe) + AMP + diphosphate + H(+). This Bifidobacterium longum (strain NCC 2705) protein is Phenylalanine--tRNA ligase beta subunit.